The sequence spans 234 residues: Triosephosphate isomerase (234 aa).

Asn-8 to Lys-10 is a binding site for substrate. The active-site Electrophile is His-90. Glu-159 acts as the Proton acceptor in catalysis. Residues Gly-165 and Ser-197 each contribute to the substrate site.

It belongs to the triosephosphate isomerase family. In terms of assembly, homodimer.

It localises to the cytoplasm. It carries out the reaction D-glyceraldehyde 3-phosphate = dihydroxyacetone phosphate. Its pathway is carbohydrate biosynthesis; gluconeogenesis. It functions in the pathway carbohydrate degradation; glycolysis; D-glyceraldehyde 3-phosphate from glycerone phosphate: step 1/1. Involved in the gluconeogenesis. Catalyzes stereospecifically the conversion of dihydroxyacetone phosphate (DHAP) to D-glyceraldehyde-3-phosphate (G3P). This Helicobacter pylori (strain Shi470) protein is Triosephosphate isomerase.